The following is a 253-amino-acid chain: MHTKRIIPCLDVKEGRVVKGINFEGLVDVGDPVALAEYYNKQGADELVFLDITATHEKRGIMEKVVQSVAEKIFIPFTVGGGLQTLDDIKSILRAGADKVSLNSAAVRNKMLIKEGAFYFGSQCIVLAADAKKRSDNTGWNVVINGGRIDTGLDLLKWIEEATALGAGEILLTSMDADGTKKGFDLELTKAVSDITNVPVIASGGCGCLEDFYDVFKSNIADAALAASLFHYGELTVDEVKRYLHDKNVSVRI.

Catalysis depends on residues Asp-11 and Asp-130.

Belongs to the HisA/HisF family. As to quaternary structure, heterodimer of HisH and HisF.

Its subcellular location is the cytoplasm. It carries out the reaction 5-[(5-phospho-1-deoxy-D-ribulos-1-ylimino)methylamino]-1-(5-phospho-beta-D-ribosyl)imidazole-4-carboxamide + L-glutamine = D-erythro-1-(imidazol-4-yl)glycerol 3-phosphate + 5-amino-1-(5-phospho-beta-D-ribosyl)imidazole-4-carboxamide + L-glutamate + H(+). The protein operates within amino-acid biosynthesis; L-histidine biosynthesis; L-histidine from 5-phospho-alpha-D-ribose 1-diphosphate: step 5/9. Its function is as follows. IGPS catalyzes the conversion of PRFAR and glutamine to IGP, AICAR and glutamate. The HisF subunit catalyzes the cyclization activity that produces IGP and AICAR from PRFAR using the ammonia provided by the HisH subunit. This is Imidazole glycerol phosphate synthase subunit HisF from Clostridium beijerinckii (strain ATCC 51743 / NCIMB 8052) (Clostridium acetobutylicum).